The following is a 337-amino-acid chain: Protein hairy (337 aa).

The segment at 29-48 (KSDRRSNKPIMEKRRRARIN) is interaction with Topors. The 58-residue stretch at 31 to 88 (DRRSNKPIMEKRRRARINNCLNELKTLILDATKKDPARHSKLEKADILEKTVKHLQEL) folds into the bHLH domain. The 30-residue stretch at 107–136 (FKAGFADCVNEVSRFPGIEPAQRRRLLQHL) folds into the Orange domain. Disordered stretches follow at residues 146 to 178 (ELHQ…SQQG) and 259 to 311 (MPQR…VIQR). Residues 263–301 (TASTGSASSHSSAGYESAPGSSSSCSYAPPSPANSSYEP) are compositionally biased toward low complexity. The short motif at 334-337 (WRPW) is the WRPW motif element.

In terms of assembly, transcription repression requires formation of a complex with a corepressor protein (Groucho). Interacts with gro (via WPRW motif) and Topors. In terms of processing, ubiquitinated by Topors.

The protein resides in the nucleus. Functionally, pair-rule protein that regulates embryonic segmentation and adult bristle patterning. Transcriptional repressor of genes that require a bHLH protein for their transcription (e.g. ftz). In Drosophila melanogaster (Fruit fly), this protein is Protein hairy.